The sequence spans 448 residues: Phosphoglucosamine mutase (448 aa).

The active-site Phosphoserine intermediate is Ser-100. Ser-100, Asp-240, Asp-242, and Asp-244 together coordinate Mg(2+). Phosphoserine is present on Ser-100.

This sequence belongs to the phosphohexose mutase family. The cofactor is Mg(2+). Post-translationally, activated by phosphorylation.

The catalysed reaction is alpha-D-glucosamine 1-phosphate = D-glucosamine 6-phosphate. Functionally, catalyzes the conversion of glucosamine-6-phosphate to glucosamine-1-phosphate. The sequence is that of Phosphoglucosamine mutase from Bacillus velezensis (strain DSM 23117 / BGSC 10A6 / LMG 26770 / FZB42) (Bacillus amyloliquefaciens subsp. plantarum).